The sequence spans 601 residues: Sulfite reductase [NADPH] flavoprotein alpha-component (601 aa).

The 139-residue stretch at 64–202 (ITLISASQTG…SAQQWRQQIV (139 aa)) folds into the Flavodoxin-like domain. FMN-binding positions include 70–75 (SQTGNA), 117–120 (STQG), and 153–162 (LGDTSYEHFC). The 215-residue stretch at 236 to 450 (AAPLTAQLSV…IEHNDNFRLP (215 aa)) folds into the FAD-binding FR-type domain. FAD-binding positions include Thr324, Lys358, 388–391 (RLYS), 406–408 (TVG), Tyr412, and 421–424 (GGAS). NADP(+) is bound by residues 521 to 522 (SR), 527 to 531 (KIYVQ), and Asp563. FAD is bound at residue Tyr601.

The protein belongs to the NADPH-dependent sulphite reductase flavoprotein subunit CysJ family. It in the N-terminal section; belongs to the flavodoxin family. In the C-terminal section; belongs to the flavoprotein pyridine nucleotide cytochrome reductase family. Alpha(8)-beta(8). The alpha component is a flavoprotein, the beta component is a hemoprotein. FAD serves as cofactor. Requires FMN as cofactor.

It carries out the reaction hydrogen sulfide + 3 NADP(+) + 3 H2O = sulfite + 3 NADPH + 4 H(+). Its pathway is sulfur metabolism; hydrogen sulfide biosynthesis; hydrogen sulfide from sulfite (NADPH route): step 1/1. Component of the sulfite reductase complex that catalyzes the 6-electron reduction of sulfite to sulfide. This is one of several activities required for the biosynthesis of L-cysteine from sulfate. The flavoprotein component catalyzes the electron flow from NADPH -&gt; FAD -&gt; FMN to the hemoprotein component. This is Sulfite reductase [NADPH] flavoprotein alpha-component from Yersinia enterocolitica serotype O:8 / biotype 1B (strain NCTC 13174 / 8081).